Here is a 34-residue protein sequence, read N- to C-terminus: MSDIN-like toxin proprotein 5 (34 aa).

Residues 1 to 10 (MSDINTARLP) constitute a propeptide that is removed on maturation. The segment at residues 11–20 (YVVFMSFIPP) is a cross-link (cyclopeptide (Tyr-Pro)). Residues 21–34 (CVNDDIQVVLTRGE) constitute a propeptide that is removed on maturation.

It belongs to the MSDIN fungal toxin family. Post-translationally, processed by the macrocyclase-peptidase enzyme POPB to yield a toxic cyclic decapeptide. POPB first removes 10 residues from the N-terminus. Conformational trapping of the remaining peptide forces the enzyme to release this intermediate rather than proceed to macrocyclization. The enzyme rebinds the remaining peptide in a different conformation and catalyzes macrocyclization of the N-terminal 10 residues.

In terms of biological role, probable toxin that belongs to the MSDIN-like toxin family responsible for a large number of food poisoning cases and deaths. The protein is MSDIN-like toxin proprotein 5 of Amanita bisporigera (Destroying angel).